A 441-amino-acid polypeptide reads, in one-letter code: Trigger factor (441 aa).

In terms of domain architecture, PPIase FKBP-type spans Gly175–Pro257.

This sequence belongs to the FKBP-type PPIase family. Tig subfamily.

Its subcellular location is the cytoplasm. The enzyme catalyses [protein]-peptidylproline (omega=180) = [protein]-peptidylproline (omega=0). Involved in protein export. Acts as a chaperone by maintaining the newly synthesized protein in an open conformation. Functions as a peptidyl-prolyl cis-trans isomerase. This is Trigger factor from Chlamydia abortus (strain DSM 27085 / S26/3) (Chlamydophila abortus).